The chain runs to 193 residues: Penicillin-binding protein activator LpoB (193 aa).

The first 16 residues, 1-16, serve as a signal peptide directing secretion; that stretch reads MKKYLGVILAALVLTG. A lipid anchor (N-palmitoyl cysteine) is attached at Cys17. Residue Cys17 is the site of S-diacylglycerol cysteine attachment. The segment at 17–55 is disordered; that stretch reads CPSRPPEPTEPPATIEPVEPQVPTTPTLPPGESVPQPPK. Low complexity predominate over residues 28–41; sequence PATIEPVEPQVPTT.

It belongs to the LpoB family. Interacts with PBP1b.

It is found in the cell outer membrane. Its function is as follows. Regulator of peptidoglycan synthesis that is essential for the function of penicillin-binding protein 1B (PBP1b). The sequence is that of Penicillin-binding protein activator LpoB from Pectobacterium carotovorum subsp. carotovorum (strain PC1).